The primary structure comprises 555 residues: Putative polyketide hydroxylase (555 aa).

FAD-binding positions include 16-45 (PVLVVGGSLVGLSTSVFLGRLGVRHMLVER) and 303-313 (YRAGRVFLAGD). The interval 366 to 395 (ATTARAAARSAEHSHPGFAPPPGTSGGPQG) is disordered.

The protein belongs to the PheA/TfdB FAD monooxygenase family. FAD is required as a cofactor.

Functionally, involved in developmentally regulated synthesis of a compound biosynthetically related to polyketide antibiotics which is essential for spore color in Streptomyces halstedii. This is Putative polyketide hydroxylase (schC) from Streptomyces halstedii.